A 534-amino-acid chain; its full sequence is MRMQRRHLLKNAAAALAALGLPALPQWALAAKAVGLRRLGQPQPFDYAWLKGRARELAKAPYKSHKQVLPGPLEALNWDQYQSIRYRQDHALWADGNGKFQAKFFHLGLYFHTPVHIYDIVDGKAQQLAYDPAAFDYGKSGLGGKQLPKDLGFAGFRLNTRKDTERDFSAFLGASYFRAVGKEGQYGQSARGLAIDTGTGGPEEFPDFIAYYLEQPAADSNTVVVYGLLDSPSIAGAYRFAITNGDVLLMDIDSALYPRKTIERLGIGPCTSMYQVGENDNRMDWDWRPEIHDTDGLAMWTGGGEWIWRPLCNPPHVRFNMFVDENPRGFGLLQRDRNFDHYQDDGVFYEKRPCLWVEPKSGWGKGSVQLVEIPTVDETFDNIVAFWNPQAKPQPGQELLMGYRLYWGVQPPASAPLAHCVATRTGLGGIVGQKRSHFSWRFAVDFAGGELAALAKDPKAKVEAVLQVSRGTTEIVSARPLHELKGYRAMFDLVPPDEGTQQIDIRLYLRANGKPLTETWLYQWTPLAASERKN.

The tat-type signal signal peptide spans 1–30; the sequence is MRMQRRHLLKNAAAALAALGLPALPQWALA.

Belongs to the OpgD/OpgG family. In terms of processing, predicted to be exported by the Tat system. The position of the signal peptide cleavage has not been experimentally proven.

It is found in the periplasm. It participates in glycan metabolism; osmoregulated periplasmic glucan (OPG) biosynthesis. In terms of biological role, probably involved in the control of the structural glucose backbone of osmoregulated periplasmic glucans (OPGs). In Xanthomonas oryzae pv. oryzae (strain KACC10331 / KXO85), this protein is Glucans biosynthesis protein D.